The primary structure comprises 562 residues: Cytosolic Fe-S cluster assembly factor nar1 (562 aa).

Cysteine 20 serves as a coordination point for [4Fe-4S] cluster. Residues 28 to 47 (PKNESSNSQNPYEVTTEDKV) form a disordered region. Residues 29-40 (KNESSNSQNPYE) are compositionally biased toward polar residues. Cysteine 62, cysteine 65, cysteine 68, cysteine 214, and cysteine 269 together coordinate [4Fe-4S] cluster. The tract at residues 439–462 (ARVPAASAGGNRRQPISRNSASAG) is disordered. A compositionally biased stretch (polar residues) spans 452–462 (QPISRNSASAG). The [4Fe-4S] cluster site is built by cysteine 475 and cysteine 479. Disordered regions lie at residues 492 to 513 (REAS…PTPH) and 541 to 562 (HSPS…IGLT). The segment covering 494 to 505 (ASTSTQSVTAVE) has biased composition (polar residues).

This sequence belongs to the NARF family.

Component of the cytosolic Fe/S protein assembly machinery. Required for maturation of extramitochondrial Fe/S proteins. May play a role in the transfer of pre-assembled Fe/S clusters to target apoproteins. The chain is Cytosolic Fe-S cluster assembly factor nar1 (nar1) from Aspergillus flavus (strain ATCC 200026 / FGSC A1120 / IAM 13836 / NRRL 3357 / JCM 12722 / SRRC 167).